We begin with the raw amino-acid sequence, 241 residues long: SURF1-like protein (241 aa).

2 helical membrane-spanning segments follow: residues 5-25 (LTVL…LNRL) and 199-219 (LEYA…YRIY).

It belongs to the SURF1 family.

The protein resides in the cell membrane. The protein is SURF1-like protein of Rickettsia bellii (strain RML369-C).